A 156-amino-acid chain; its full sequence is Snaclec A10 (156 aa).

Residues 1–23 (MGRSISVSFGLLVVFLSLSGIGA) form the signal peptide. Disulfide bonds link C27-C38, C55-C154, and C129-C146. In terms of domain architecture, C-type lectin spans 34 to 155 (YDQHCYQAVD…CGQPYRFTCE (122 aa)).

This sequence belongs to the snaclec family. As to quaternary structure, heterodimer; disulfide-linked. In terms of tissue distribution, expressed by the venom gland.

It localises to the secreted. Functionally, interferes with one step of hemostasis (modulation of platelet aggregation, or coagulation cascade, for example). The chain is Snaclec A10 from Macrovipera lebetinus (Levantine viper).